The following is a 674-amino-acid chain: Tripartite terminase subunit 3 (674 aa).

Positions 212-219 match the Walker A motif motif; the sequence is VPRRHGKT. The short motif at 305 to 310 is the Walker B motif element; it reads LLLVDE. Glu310 serves as the catalytic For ATPase activity. Active-site for nuclease activity residues include Asp463, Glu534, and Asp651.

This sequence belongs to the herpesviridae TRM3 protein family. As to quaternary structure, interacts with the terminase subunits TRM1 and TRM2. Interacts with portal protein.

The protein localises to the host nucleus. In terms of biological role, component of the molecular motor that translocates viral genomic DNA in empty capsid during DNA packaging. Forms a tripartite terminase complex together with TRM1 and TRM2 in the host cytoplasm. Once the complex reaches the host nucleus, it interacts with the capsid portal vertex. This portal forms a ring in which genomic DNA is translocated into the capsid. TRM3 carries an RNase H-like nuclease activity that plays an important role for the cleavage of concatemeric viral DNA into unit length genomes. This Homo sapiens (Human) protein is Tripartite terminase subunit 3.